The chain runs to 962 residues: Alpha-glucan phosphorylase 1 (962 aa).

A chloroplast-targeting transit peptide spans 1–63; that stretch reads MDTMRISGVS…RSFLSVKSIS (63 aa). The segment at 525–552 is disordered; that stretch reads AKDAQNGVKTEQEEEKTAGEEEEDEVIP. An N6-(pyridoxal phosphate)lysine modification is found at Lys-808.

Belongs to the glycogen phosphorylase family. Requires pyridoxal 5'-phosphate as cofactor.

It is found in the plastid. Its subcellular location is the chloroplast stroma. The enzyme catalyses [(1-&gt;4)-alpha-D-glucosyl](n) + phosphate = [(1-&gt;4)-alpha-D-glucosyl](n-1) + alpha-D-glucose 1-phosphate. Functionally, phosphorylase is an important allosteric enzyme in carbohydrate metabolism. Enzymes from different sources differ in their regulatory mechanisms and in their natural substrates. However, all known phosphorylases share catalytic and structural properties. May be not required for the degradation of starch, but the phosphorolysis of starch may play an important role in water stress tolerance. The polypeptide is Alpha-glucan phosphorylase 1 (PHS1) (Arabidopsis thaliana (Mouse-ear cress)).